The chain runs to 315 residues: Methionyl-tRNA formyltransferase (315 aa).

Residue 111–114 (SLLP) participates in (6S)-5,6,7,8-tetrahydrofolate binding.

This sequence belongs to the Fmt family.

It catalyses the reaction L-methionyl-tRNA(fMet) + (6R)-10-formyltetrahydrofolate = N-formyl-L-methionyl-tRNA(fMet) + (6S)-5,6,7,8-tetrahydrofolate + H(+). Functionally, attaches a formyl group to the free amino group of methionyl-tRNA(fMet). The formyl group appears to play a dual role in the initiator identity of N-formylmethionyl-tRNA by promoting its recognition by IF2 and preventing the misappropriation of this tRNA by the elongation apparatus. This chain is Methionyl-tRNA formyltransferase, found in Flavobacterium johnsoniae (strain ATCC 17061 / DSM 2064 / JCM 8514 / BCRC 14874 / CCUG 350202 / NBRC 14942 / NCIMB 11054 / UW101) (Cytophaga johnsonae).